The primary structure comprises 431 residues: Glucose-1-phosphate adenylyltransferase (431 aa).

Lys-39 is a binding site for beta-D-fructose 1,6-bisphosphate. Arg-40, His-46, and Arg-52 together coordinate AMP. Tyr-114 contributes to the alpha-D-glucose 1-phosphate binding site. Arg-130 is a binding site for AMP. Residues Gly-179, 194-195 (EK), and Ser-212 contribute to the alpha-D-glucose 1-phosphate site. Positions 370 and 386 each coordinate AMP. Beta-D-fructose 1,6-bisphosphate is bound by residues 419 to 423 (REMLR) and 429 to 431 (QER).

It belongs to the bacterial/plant glucose-1-phosphate adenylyltransferase family. As to quaternary structure, homotetramer.

It carries out the reaction alpha-D-glucose 1-phosphate + ATP + H(+) = ADP-alpha-D-glucose + diphosphate. It participates in glycan biosynthesis; glycogen biosynthesis. Allosterically activated by fructose-1,6-bisphosphate (F16BP) and inhibited by AMP. In terms of biological role, involved in the biosynthesis of ADP-glucose, a building block required for the elongation reactions to produce glycogen. Catalyzes the reaction between ATP and alpha-D-glucose 1-phosphate (G1P) to produce pyrophosphate and ADP-Glc. The protein is Glucose-1-phosphate adenylyltransferase of Escherichia fergusonii (strain ATCC 35469 / DSM 13698 / CCUG 18766 / IAM 14443 / JCM 21226 / LMG 7866 / NBRC 102419 / NCTC 12128 / CDC 0568-73).